We begin with the raw amino-acid sequence, 339 residues long: Very-long-chain 3-oxoacyl-CoA reductase (339 aa).

Residues 19 to 39 (VALFLLSIGGLFTACKLFSFC) form a helical membrane-spanning segment. NADP(+) contacts are provided by Leu-64, Lys-105, Asp-119, Asp-127, Asn-146, Tyr-213, Lys-217, Val-246, and Ser-248. The active-site Proton donor is the Tyr-213. Lys-217 (lowers pKa of active site Tyr) is an active-site residue.

The protein belongs to the short-chain dehydrogenases/reductases (SDR) family.

Its subcellular location is the endoplasmic reticulum membrane. The catalysed reaction is a very-long-chain (3R)-3-hydroxyacyl-CoA + NADP(+) = a very-long-chain 3-oxoacyl-CoA + NADPH + H(+). Its pathway is lipid metabolism; fatty acid biosynthesis. Functionally, component of the microsomal membrane bound fatty acid elongation system, which produces the 26-carbon very long-chain fatty acids (VLCFA) from palmitate. Catalyzes the reduction of the 3-ketoacyl-CoA intermediate that is formed in each cycle of fatty acid elongation. VLCFAs serve as precursors for ceramide and sphingolipids. The polypeptide is Very-long-chain 3-oxoacyl-CoA reductase (Ajellomyces capsulatus (strain NAm1 / WU24) (Darling's disease fungus)).